Consider the following 306-residue polypeptide: Pantothenate kinase (306 aa).

91–98 serves as a coordination point for ATP; the sequence is GSVAVGKS.

The protein belongs to the prokaryotic pantothenate kinase family.

The protein localises to the cytoplasm. The enzyme catalyses (R)-pantothenate + ATP = (R)-4'-phosphopantothenate + ADP + H(+). It functions in the pathway cofactor biosynthesis; coenzyme A biosynthesis; CoA from (R)-pantothenate: step 1/5. The sequence is that of Pantothenate kinase from Streptococcus pneumoniae (strain Hungary19A-6).